The following is a 454-amino-acid chain: tRNA modification GTPase MnmE (454 aa).

3 residues coordinate (6S)-5-formyl-5,6,7,8-tetrahydrofolate: Arg23, Glu80, and Lys120. The TrmE-type G domain occupies 216–377 (GMKVVIAGRP…LRNHLKQSMG (162 aa)). Asn226 contacts K(+). Residues 226–231 (NAGKSS), 245–251 (TDIAGTT), 270–273 (DTAG), 335–338 (NKAD), and 358–360 (SAR) each bind GTP. Ser230 lines the Mg(2+) pocket. K(+) is bound by residues Thr245, Ile247, and Thr250. Thr251 provides a ligand contact to Mg(2+). A (6S)-5-formyl-5,6,7,8-tetrahydrofolate-binding site is contributed by Lys454.

The protein belongs to the TRAFAC class TrmE-Era-EngA-EngB-Septin-like GTPase superfamily. TrmE GTPase family. Homodimer. Heterotetramer of two MnmE and two MnmG subunits. It depends on K(+) as a cofactor.

It is found in the cytoplasm. Its function is as follows. Exhibits a very high intrinsic GTPase hydrolysis rate. Involved in the addition of a carboxymethylaminomethyl (cmnm) group at the wobble position (U34) of certain tRNAs, forming tRNA-cmnm(5)s(2)U34. The polypeptide is tRNA modification GTPase MnmE (Shigella flexneri serotype 5b (strain 8401)).